Reading from the N-terminus, the 122-residue chain is Small ribosomal subunit protein uS13 (122 aa).

The interval 99–122 (RGQRTHTNARTRKGPAKAIAGKKK) is disordered.

The protein belongs to the universal ribosomal protein uS13 family. Part of the 30S ribosomal subunit. Forms a loose heterodimer with protein S19. Forms two bridges to the 50S subunit in the 70S ribosome.

In terms of biological role, located at the top of the head of the 30S subunit, it contacts several helices of the 16S rRNA. In the 70S ribosome it contacts the 23S rRNA (bridge B1a) and protein L5 of the 50S subunit (bridge B1b), connecting the 2 subunits; these bridges are implicated in subunit movement. Contacts the tRNAs in the A and P-sites. In Parvibaculum lavamentivorans (strain DS-1 / DSM 13023 / NCIMB 13966), this protein is Small ribosomal subunit protein uS13.